A 235-amino-acid polypeptide reads, in one-letter code: MNEYFVNLNIKEMPETMRPREKLIARGEDKLDEAELLAIVLGSGTREMNALELARQLLARHGGSLRFLMSATLEELTAEKGIGMAKAVSIKAAIEMGRRVVGNIQLRRIIKSPEDVQEAVRELAMEEMRHYDREHFRVLYLDRKGGLITMQDISIGGLHSSIVHPREVFKTAVKKSAASMILVHNHPSGDPTPSQEDIEITRRLIEAGKIMGIEILDHVIIGEINYCSLKARGLI.

The MPN domain maps to 109-235; sequence IIKSPEDVQE…YCSLKARGLI (127 aa). Zn(2+) is bound by residues His184, His186, and Asp197. A JAMM motif motif is present at residues 184–197; sequence HNHPSGDPTPSQED.

The protein belongs to the UPF0758 family.

The protein is UPF0758 protein Swol_1642 of Syntrophomonas wolfei subsp. wolfei (strain DSM 2245B / Goettingen).